We begin with the raw amino-acid sequence, 292 residues long: NAC domain-containing protein 105 (292 aa).

Positions 12 to 162 constitute an NAC domain; it reads IPPGFRFHPT…GWVVCRAFKK (151 aa). Residues 112-168 mediate DNA binding; the sequence is IGMRKTLVFYRGRAPNGQKSDWIIHEYYSLESHQNSPPQEEGWVVCRAFKKRTTIPT. Residues 237-259 show a composition bias toward polar residues; that stretch reads LPQLESPSLPSEITPHSTTFSEN. A disordered region spans residues 237 to 269; that stretch reads LPQLESPSLPSEITPHSTTFSENSSRKDDMSSE. Basic and acidic residues predominate over residues 260 to 269; it reads SSRKDDMSSE.

Belongs to the plant vascular related NAC-domain protein family. As to quaternary structure, interacts with NAC030/VND7. As to expression, detected in root protoxylem and metaxylem poles and in vessels of protoxylems, outermost metaxylems, inner metaxylems, shoots and hypocotyls. Expressed in roots, hypocotyls, cotyledons and leaves. Present in developing xylems. Present in root developing xylems. Specifically expressed in vessels but not in interfascicular fibers in stems.

It is found in the nucleus. Transcription activator that binds to the secondary wall NAC binding element (SNBE), 5'-(T/A)NN(C/T)(T/C/G)TNNNNNNNA(A/C)GN(A/C/T)(A/T)-3', in the promoter of target genes. Involved in xylem formation by promoting the expression of secondary wall-associated transcription factors and of genes involved in secondary wall biosynthesis and programmed cell death, genes driven by the secondary wall NAC binding element (SNBE). Triggers thickening of secondary walls. The protein is NAC domain-containing protein 105 of Arabidopsis thaliana (Mouse-ear cress).